Consider the following 347-residue polypeptide: 4-hydroxy-2-oxovalerate aldolase (347 aa).

Residues 2-252 (ILISDATLRD…DTRTTFERVM (251 aa)) enclose the Pyruvate carboxyltransferase domain. 10–11 (RD) lines the substrate pocket. Position 11 (D11) interacts with Mn(2+). The Proton acceptor role is filled by H14. 2 residues coordinate substrate: S164 and H191. The Mn(2+) site is built by H191 and H193.

Belongs to the 4-hydroxy-2-oxovalerate aldolase family.

The enzyme catalyses (S)-4-hydroxy-2-oxopentanoate = acetaldehyde + pyruvate. This is 4-hydroxy-2-oxovalerate aldolase (mhpE) from Burkholderia pseudomallei (strain K96243).